Reading from the N-terminus, the 201-residue chain is LexA repressor (201 aa).

The segment at residues 27–47 (RMEISSAFGFASPNAAEDHLK) is a DNA-binding region (H-T-H motif). Residues Ser-116 and Lys-153 each act as for autocatalytic cleavage activity in the active site.

Belongs to the peptidase S24 family. As to quaternary structure, homodimer.

The enzyme catalyses Hydrolysis of Ala-|-Gly bond in repressor LexA.. Its function is as follows. Represses a number of genes involved in the response to DNA damage (SOS response), including recA and lexA. In the presence of single-stranded DNA, RecA interacts with LexA causing an autocatalytic cleavage which disrupts the DNA-binding part of LexA, leading to derepression of the SOS regulon and eventually DNA repair. The polypeptide is LexA repressor (Dechloromonas aromatica (strain RCB)).